The following is a 257-amino-acid chain: Type III pantothenate kinase (257 aa).

Position 7-14 (7-14) interacts with ATP; the sequence is DIGNSHTV. 106 to 109 provides a ligand contact to substrate; sequence GTDR. Residue D108 is the Proton acceptor of the active site. D128 provides a ligand contact to K(+). T132 is an ATP binding site. T184 provides a ligand contact to substrate.

It belongs to the type III pantothenate kinase family. Homodimer. NH4(+) serves as cofactor. The cofactor is K(+).

The protein localises to the cytoplasm. The catalysed reaction is (R)-pantothenate + ATP = (R)-4'-phosphopantothenate + ADP + H(+). It participates in cofactor biosynthesis; coenzyme A biosynthesis; CoA from (R)-pantothenate: step 1/5. In terms of biological role, catalyzes the phosphorylation of pantothenate (Pan), the first step in CoA biosynthesis. In Nocardioides sp. (strain ATCC BAA-499 / JS614), this protein is Type III pantothenate kinase.